The chain runs to 125 residues: Protein ApaG (125 aa).

One can recognise an ApaG domain in the interval 1 to 125 (MINSPRVCVQ…FRLAIPSLIN (125 aa)).

The polypeptide is Protein ApaG (Sodalis glossinidius (strain morsitans)).